We begin with the raw amino-acid sequence, 293 residues long: Cell division protein FtsQ (293 aa).

Topologically, residues 1-29 are cytoplasmic; the sequence is MSQVRSKSQQGKRQAKPQEVVPATILTEQ. A helical membrane pass occupies residues 30–52; that stretch reads LSTYAFGTVTAGAVMVAVAAWMG. The Periplasmic segment spans residues 53–293; it reads GSLASIDERI…SQIDDKSGGA (241 aa). A POTRA domain is found at 75–144; it reads FTVTKISIEG…NDIWILAENR (70 aa).

The protein belongs to the FtsQ/DivIB family. FtsQ subfamily.

The protein resides in the cell inner membrane. Essential cell division protein. This is Cell division protein FtsQ from Hirschia baltica (strain ATCC 49814 / DSM 5838 / IFAM 1418).